We begin with the raw amino-acid sequence, 638 residues long: MSDSFNLPLRPLTEKRERPDPLPVEIAQINAQYGSFRDVTEDSLRAKIEADKNKDPWFDKEENDNASADEDTTERLDQLYKRRAAITQFALQAHMEAMFALDFVSLLLSKHTPRQAEMSMSAYLKQVAPLGSLNSEIVNPPPKPESAARDTKNVSRGWRLQNFNSAASKLLDSATRLEAEVASETRYWDEVLAVKEKGWKVSRLPRERQALGVQYGFLEATPIFRDRGLAALRRTNDGSLILDKGLIPLKARTVRVRVRSRGQITGCSKNQPASDNTESIESRILQARDTVYEEELFHELVREARILGSQGVTTRQNLVQFPVSEEQEVLLDLIDSDQISPENDVVSSNEHAVVADALAHAIRILLAYAHRQNLRRRTQLPTPLTPKRRQTPEYQLLRPVMAYLQHSSHVRWLESLLNDINQILKSAGITCDFTATPFSSLSLRRTISGLPKVEALVQEFLLPYESTFSAQLVTPQSSFRVKVRTNVTTPPLGTHYEISVNMPQYPDVRPPNRIGLQDEAASILTHFVLLDILTAITHAKGSSVKGIKQETGHLLTWQAAYPHNGELLALSSTGQHKKMKVSLSRHELTVRVYSIRGIDGFGKPAVDKTPAMRSQTWKCDGTPDQPNLMDFIAEVSKE.

Positions 1–21 are disordered; sequence MSDSFNLPLRPLTEKRERPDP.

It belongs to the Mediator complex subunit 17 family. In terms of assembly, component of the Mediator complex.

The protein localises to the nucleus. Its function is as follows. Component of the Mediator complex, a coactivator involved in the regulated transcription of nearly all RNA polymerase II-dependent genes. Mediator functions as a bridge to convey information from gene-specific regulatory proteins to the basal RNA polymerase II transcription machinery. Mediator is recruited to promoters by direct interactions with regulatory proteins and serves as a scaffold for the assembly of a functional preinitiation complex with RNA polymerase II and the general transcription factors. This is Mediator of RNA polymerase II transcription subunit 17 (srb4) from Aspergillus oryzae (strain ATCC 42149 / RIB 40) (Yellow koji mold).